A 159-amino-acid chain; its full sequence is Ribonuclease H (159 aa).

The RNase H type-1 domain maps to 2–144 (SQDPVIIHTD…ADELATRGLQ (143 aa)). The Mg(2+) site is built by Asp-11, Glu-50, Asp-72, and Asp-136.

It belongs to the RNase H family. Monomer. The cofactor is Mg(2+).

It is found in the cytoplasm. It catalyses the reaction Endonucleolytic cleavage to 5'-phosphomonoester.. Endonuclease that specifically degrades the RNA of RNA-DNA hybrids. The chain is Ribonuclease H from Mycolicibacterium smegmatis (strain ATCC 700084 / mc(2)155) (Mycobacterium smegmatis).